The following is a 461-amino-acid chain: MATATTQRPLKGPAKRMSTWTMTREAITIGFDAGDGFLGRLRGSDITRFRCAGRRFVSISHPDYVDHVLHEARLKYVKSDEYGPIRATAGLNLLTDEGDSWARHRGALNSTFARRHLRGLVGLMIDPIADVTAALVPGAQFDMHQSMVETTLRVVANALFSQDFGPLVQSMHDLATRGLRRAEKLERLGLWGLMPRTVYDTLIWCIYSGVHLPPPLREMQEITLTLDRAINSVIDRRLAEPTNSADLLNVLLSADGGIWPRQRVRDEALTFMLAGHETTANAMSWFWYLMALNPQARDHMLTELDDVLGMRRPTADDLGKLAWTTACLQESQRYFSSVWIIAREAVDDDIIDGHRIRRGTTVVIPIHHIHHDPRWWPDPDRFDPGRFLRCPTDRPRCAYLPFGGGRRICIGQSFALMEMVLMAAIMSQHFTFDLAPGYHVELEATLTLRPKHGVHVIGRRR.

Cysteine 409 lines the heme pocket.

This sequence belongs to the cytochrome P450 family. Heme is required as a cofactor.

The chain is Putative cytochrome P450 132 (cyp132) from Mycobacterium bovis (strain ATCC BAA-935 / AF2122/97).